The following is a 43-amino-acid chain: MVLNDKVYENISPQTLACWFMDDGGMNGSHSHGLQFRVSVILK.

The protein belongs to the LAGLIDADG endonuclease family.

The protein localises to the mitochondrion. Its function is as follows. Mitochondrial DNA endonuclease involved in intron homing. The chain is Probable intron-encoded DNA endonuclease 2 (hegI2) from Mycosarcoma maydis (Corn smut fungus).